The chain runs to 222 residues: Bone marrow proteoglycan (222 aa).

A signal peptide spans 1-16 (MKLPLLLALLFGAVSA). A propeptide spans 17–105 (LHLRSETSTF…VKVVGIPGCQ (89 aa)) (acidic). O-linked (GalNAc...) threonine; partial glycosylation occurs at Thr-23. Residue Ser-24 is glycosylated (O-linked (GalNAc...) serine). O-linked (GalNAc...) threonine glycosylation occurs at Thr-25. The disordered stretch occupies residues 25–75 (TFETPLGAKTLPEDEETPEQEMEETPCRELEEEEEWGSGSEDASKKDGAVE). Thr-34 carries O-linked (GalNAc...) threonine; partial glycosylation. The segment covering 37–60 (EDEETPEQEMEETPCRELEEEEEW) has biased composition (acidic residues). The O-linked (Xyl...) (chondroitin sulfate) serine glycan is linked to Ser-62. Asn-86 carries an N-linked (GlcNAc...) asparagine glycan. The C-type lectin domain occupies 104-222 (CQTCRYLLVR…LRRLPFICSY (119 aa)). Cystine bridges form between Cys-125/Cys-220 and Cys-197/Cys-212.

In terms of assembly, in pregnancy serum, the proform exists as a disulfide-linked 2:2 heterotetramer with PAPPA, as a disulfide-linked 2:2 heterotetramer with AGT, and as a complex (probably a 2:2:2 heterohexamer) with AGT and C3dg. In terms of processing, nitrated. In terms of tissue distribution, detected in plasma and urine (at protein level). Detected in placenta (at protein level). High levels of the proform in placenta and pregnancy serum; in placenta, localized to X cells of septa and anchoring villi. Lower levels in a variety of other tissues including kidney, myometrium, endometrium, ovaries, breast, prostate, bone marrow and colon.

The protein localises to the secreted. Its subcellular location is the cytoplasmic vesicle. It localises to the secretory vesicle. Its function is as follows. Cytotoxin and helminthotoxin. Also induces non-cytolytic histamine release from human basophils. Involved in antiparasitic defense mechanisms and immune hypersensitivity reactions. The proform acts as a proteinase inhibitor, reducing the activity of PAPPA. In Homo sapiens (Human), this protein is Bone marrow proteoglycan (PRG2).